We begin with the raw amino-acid sequence, 273 residues long: MLGQLLPHTARGLGAAEMPGQGPGSDWTERSSSAEPPAVAGTEGGGGGSAGYSCYQNSKGSDRIKDGYKVNSHIAKLQELWKTPQNQTIHLSKSMMEASFFKHPDLTTGQKRYLCSIAKIYNANYLKMLMKRQYMHVLQHSSQKPGVLTHHRSRLSSRYSQKQHYPCTTWRHQLEREDSGSSDIAAASAPEMLIQHSLWRPVRNKEGIKTGYASKTRCKSLKIFRRPRKLFMQTVSSDDSESHMSEEKKEEDLLNNFMQSMSIEEQGEHLMLT.

The segment at 1–47 (MLGQLLPHTARGLGAAEMPGQGPGSDWTERSSSAEPPAVAGTEGGGG) is disordered.

It belongs to the FAM216 family.

The chain is Protein FAM216A (FAM216A) from Homo sapiens (Human).